The sequence spans 212 residues: Thymidine kinase (212 aa).

ATP-binding positions include 11-18 (SPMNAGKT), 43-45 (DTR), and 86-89 (DEAQ). Glu-87 functions as the Proton acceptor in the catalytic mechanism. Phe-119 contacts substrate. Residues Cys-144, Cys-147, Cys-183, and Cys-186 each coordinate Zn(2+).

The protein belongs to the thymidine kinase family.

It catalyses the reaction thymidine + ATP = dTMP + ADP + H(+). The protein is Thymidine kinase (TK) of Encephalitozoon cuniculi (strain GB-M1) (Microsporidian parasite).